Here is a 711-residue protein sequence, read N- to C-terminus: DNA topoisomerase 3 (711 aa).

A Toprim domain is found at 2-135; the sequence is KSLILAEKPS…IKRLWISSVT (134 aa). Mg(2+) is bound by residues Glu-8 and Asp-104. The Topo IA-type catalytic domain maps to 152 to 580; sequence YQNLYEAALA…EMKNFTFKVV (429 aa). Residues 186–191 are interaction with DNA; the sequence is SLGRVQ. The O-(5'-phospho-DNA)-tyrosine intermediate role is filled by Tyr-305.

It belongs to the type IA topoisomerase family. Mg(2+) serves as cofactor.

It carries out the reaction ATP-independent breakage of single-stranded DNA, followed by passage and rejoining.. Its function is as follows. Releases the supercoiling and torsional tension of DNA, which is introduced during the DNA replication and transcription, by transiently cleaving and rejoining one strand of the DNA duplex. Introduces a single-strand break via transesterification at a target site in duplex DNA. The scissile phosphodiester is attacked by the catalytic tyrosine of the enzyme, resulting in the formation of a DNA-(5'-phosphotyrosyl)-enzyme intermediate and the expulsion of a 3'-OH DNA strand. The free DNA strand then undergoes passage around the unbroken strand, thus removing DNA supercoils. Finally, in the religation step, the DNA 3'-OH attacks the covalent intermediate to expel the active-site tyrosine and restore the DNA phosphodiester backbone. This chain is DNA topoisomerase 3, found in Staphylococcus epidermidis (strain ATCC 12228 / FDA PCI 1200).